A 721-amino-acid chain; its full sequence is Ribosomal RNA large subunit methyltransferase K/L (721 aa).

A THUMP domain is found at 56–167 (GMYKACLWSR…REVVTVSIDL (112 aa)).

It belongs to the methyltransferase superfamily. RlmKL family.

The protein localises to the cytoplasm. The catalysed reaction is guanosine(2445) in 23S rRNA + S-adenosyl-L-methionine = N(2)-methylguanosine(2445) in 23S rRNA + S-adenosyl-L-homocysteine + H(+). It catalyses the reaction guanosine(2069) in 23S rRNA + S-adenosyl-L-methionine = N(2)-methylguanosine(2069) in 23S rRNA + S-adenosyl-L-homocysteine + H(+). Its function is as follows. Specifically methylates the guanine in position 2445 (m2G2445) and the guanine in position 2069 (m7G2069) of 23S rRNA. This is Ribosomal RNA large subunit methyltransferase K/L from Marinomonas sp. (strain MWYL1).